Consider the following 264-residue polypeptide: 3-methyl-2-oxobutanoate hydroxymethyltransferase (264 aa).

Asp45 and Asp84 together coordinate Mg(2+). Residues 45–46 (DS), Asp84, and Lys112 contribute to the 3-methyl-2-oxobutanoate site. Glu114 is a binding site for Mg(2+). The active-site Proton acceptor is the Glu181.

This sequence belongs to the PanB family. Homodecamer; pentamer of dimers. Requires Mg(2+) as cofactor.

The protein localises to the cytoplasm. The enzyme catalyses 3-methyl-2-oxobutanoate + (6R)-5,10-methylene-5,6,7,8-tetrahydrofolate + H2O = 2-dehydropantoate + (6S)-5,6,7,8-tetrahydrofolate. It participates in cofactor biosynthesis; (R)-pantothenate biosynthesis; (R)-pantoate from 3-methyl-2-oxobutanoate: step 1/2. In terms of biological role, catalyzes the reversible reaction in which hydroxymethyl group from 5,10-methylenetetrahydrofolate is transferred onto alpha-ketoisovalerate to form ketopantoate. The sequence is that of 3-methyl-2-oxobutanoate hydroxymethyltransferase from Shewanella sp. (strain ANA-3).